Consider the following 372-residue polypeptide: Queuine tRNA-ribosyltransferase (372 aa).

Catalysis depends on D89, which acts as the Proton acceptor. Substrate-binding positions include 89–93 (DSGGF), D143, Q185, and G212. The RNA binding stretch occupies residues 243–249 (GVGKPED). D262 (nucleophile) is an active-site residue. The RNA binding; important for wobble base 34 recognition stretch occupies residues 267-271 (TRNAR). Zn(2+) contacts are provided by C300, C302, C305, and H331.

The protein belongs to the queuine tRNA-ribosyltransferase family. Homodimer. Within each dimer, one monomer is responsible for RNA recognition and catalysis, while the other monomer binds to the replacement base PreQ1. Zn(2+) is required as a cofactor.

The enzyme catalyses 7-aminomethyl-7-carbaguanine + guanosine(34) in tRNA = 7-aminomethyl-7-carbaguanosine(34) in tRNA + guanine. It functions in the pathway tRNA modification; tRNA-queuosine biosynthesis. Its function is as follows. Catalyzes the base-exchange of a guanine (G) residue with the queuine precursor 7-aminomethyl-7-deazaguanine (PreQ1) at position 34 (anticodon wobble position) in tRNAs with GU(N) anticodons (tRNA-Asp, -Asn, -His and -Tyr). Catalysis occurs through a double-displacement mechanism. The nucleophile active site attacks the C1' of nucleotide 34 to detach the guanine base from the RNA, forming a covalent enzyme-RNA intermediate. The proton acceptor active site deprotonates the incoming PreQ1, allowing a nucleophilic attack on the C1' of the ribose to form the product. After dissociation, two additional enzymatic reactions on the tRNA convert PreQ1 to queuine (Q), resulting in the hypermodified nucleoside queuosine (7-(((4,5-cis-dihydroxy-2-cyclopenten-1-yl)amino)methyl)-7-deazaguanosine). The sequence is that of Queuine tRNA-ribosyltransferase from Chromohalobacter salexigens (strain ATCC BAA-138 / DSM 3043 / CIP 106854 / NCIMB 13768 / 1H11).